Reading from the N-terminus, the 914-residue chain is Inter-alpha-trypsin inhibitor heavy chain H1 (914 aa).

The signal sequence occupies residues 1 to 30 (MDGAAVGLRVLLGLGLVSLLTLEAMPAAWG). The propeptide occupies 31–36 (LATTGR). The 130-residue stretch at 39–168 (AREKRQAVDT…KATFQLTYEE (130 aa)) folds into the VIT domain. S-linked (Hex...) cysteine glycosylation is present at Cys62. Phosphoserine is present on Ser131. Residues Asn288 and Asn291 are each glycosylated (N-linked (GlcNAc...) asparagine). The VWFA domain maps to 293-453 (SKNLVFVIDI…FNFLEVMSME (161 aa)). A phosphothreonine mark is found at Thr405 and Thr410. N-linked (GlcNAc...) asparagine glycosylation is present at Asn591. O-linked (GalNAc...) threonine glycosylation is present at Thr656. Asp675 bears the Aspartate 1-(chondroitin 4-sulfate)-ester mark. The propeptide occupies 676–914 (PHFIIYVPQK…HTDYIVPDIF (239 aa)).

It belongs to the ITIH family. I-alpha-I plasma protease inhibitors are assembled from one or two heavy chains (HC) and one light chain, bikunin. Inter-alpha-inhibitor (I-alpha-I) is composed of ITIH1/HC1, ITIH2/HC2 and bikunin. Interacts with TNFAIP6 (via Link and CUB domains). In terms of processing, heavy chains are linked to bikunin via chondroitin 4-sulfate esterified to the alpha-carboxyl of the C-terminal aspartate after propeptide cleavage. The S-linked glycan is composed of two 6-carbon sugars, possibly Glc or Gal.

The protein resides in the secreted. In terms of biological role, may act as a carrier of hyaluronan in serum or as a binding protein between hyaluronan and other matrix protein, including those on cell surfaces in tissues to regulate the localization, synthesis and degradation of hyaluronan which are essential to cells undergoing biological processes. The polypeptide is Inter-alpha-trypsin inhibitor heavy chain H1 (ITIH1) (Mesocricetus auratus (Golden hamster)).